The sequence spans 432 residues: Glutamate-gated chloride channel subunit beta (432 aa).

A signal peptide spans 1–18 (MSQYMMVAVAAVVAVAGS). Residues 19–249 (SQISRRSTGG…MQLTLKRQFS (231 aa)) lie on the Extracellular side of the membrane. A glycan (N-linked (GlcNAc...) asparagine) is linked at asparagine 52. L-glutamate is bound by residues arginine 69, arginine 88, and serine 155. Cysteine 164 and cysteine 178 are disulfide-bonded. Serine 184 is an L-glutamate binding site. Asparagine 219 carries N-linked (GlcNAc...) asparagine glycosylation. Cysteines 226 and 237 form a disulfide. A helical membrane pass occupies residues 250–272 (YYLVQLYGPTTMIVIVSWVSFWI). The Cytoplasmic segment spans residues 273 to 277 (DMHST). Residues 278-299 (AGRVALGVTTLLTMTTMQAAIN) form a helical membrane-spanning segment. Over 300–306 (AKLPPVS) the chain is Extracellular. The chain crosses the membrane as a helical span at residues 307–327 (YVKVVDVWLGACQTFVFGALL). Residues 328–402 (EYAFVSYQDS…KPDYLPAKID (75 aa)) are Cytoplasmic-facing. Residues 403–426 (YYARFCVPLGFLAFNAIYWTSCLV) traverse the membrane as a helical segment. Residues 427 to 432 (MVSRLV) lie on the Extracellular side of the membrane.

It belongs to the ligand-gated ion channel (TC 1.A.9) family. Glutamate-gated chloride channel (TC 1.A.9.4) subfamily. As to quaternary structure, pentamer. As to expression, expressed in motor neuron commissures at the anterior portion of the worms.

Its subcellular location is the postsynaptic cell membrane. It localises to the cell membrane. Its function is as follows. Glutamate-gated chloride channel subunit; channel properties may be modulated by the formation of heteromeric channels. Glutamate binding triggers a rapidly reversible current, while the anti-helmintic drug ivermectin triggers a permanently open channel configuration. In Haemonchus contortus (Barber pole worm), this protein is Glutamate-gated chloride channel subunit beta.